The chain runs to 408 residues: LL-diaminopimelate aminotransferase (408 aa).

Substrate-binding residues include Tyr-15 and Gly-42. Pyridoxal 5'-phosphate is bound by residues Tyr-72, 108–109 (SK), Tyr-132, Asn-187, Tyr-218, and 246–248 (SFS). Residues Lys-109, Tyr-132, and Asn-187 each contribute to the substrate site. Lys-249 is subject to N6-(pyridoxal phosphate)lysine. Pyridoxal 5'-phosphate-binding residues include Arg-257 and Asn-291. Asn-291 and Arg-387 together coordinate substrate.

It belongs to the class-I pyridoxal-phosphate-dependent aminotransferase family. LL-diaminopimelate aminotransferase subfamily. In terms of assembly, homodimer. Pyridoxal 5'-phosphate is required as a cofactor.

It catalyses the reaction (2S,6S)-2,6-diaminopimelate + 2-oxoglutarate = (S)-2,3,4,5-tetrahydrodipicolinate + L-glutamate + H2O + H(+). It participates in amino-acid biosynthesis; L-lysine biosynthesis via DAP pathway; LL-2,6-diaminopimelate from (S)-tetrahydrodipicolinate (aminotransferase route): step 1/1. In terms of biological role, involved in the synthesis of meso-diaminopimelate (m-DAP or DL-DAP), required for both lysine and peptidoglycan biosynthesis. Catalyzes the direct conversion of tetrahydrodipicolinate to LL-diaminopimelate. The chain is LL-diaminopimelate aminotransferase from Prochlorococcus marinus (strain NATL1A).